A 457-amino-acid chain; its full sequence is tRNA modification GTPase MnmE (457 aa).

The (6S)-5-formyl-5,6,7,8-tetrahydrofolate site is built by Arg-25, Glu-87, and Arg-126. The region spanning 223 to 377 (GISTAIIGRP…IEERINNLFF (155 aa)) is the TrmE-type G domain. Asn-233 provides a ligand contact to K(+). GTP is bound by residues 233 to 238 (NVGKSS), 252 to 258 (TDIAGTT), and 277 to 280 (DTAG). A Mg(2+)-binding site is contributed by Ser-237. K(+) contacts are provided by Thr-252, Ile-254, and Thr-257. Thr-258 contributes to the Mg(2+) binding site. Lys-457 contacts (6S)-5-formyl-5,6,7,8-tetrahydrofolate.

This sequence belongs to the TRAFAC class TrmE-Era-EngA-EngB-Septin-like GTPase superfamily. TrmE GTPase family. In terms of assembly, homodimer. Heterotetramer of two MnmE and two MnmG subunits. K(+) serves as cofactor.

Its subcellular location is the cytoplasm. Functionally, exhibits a very high intrinsic GTPase hydrolysis rate. Involved in the addition of a carboxymethylaminomethyl (cmnm) group at the wobble position (U34) of certain tRNAs, forming tRNA-cmnm(5)s(2)U34. This is tRNA modification GTPase MnmE from Streptococcus pneumoniae serotype 4 (strain ATCC BAA-334 / TIGR4).